A 271-amino-acid polypeptide reads, in one-letter code: Cell surface glycoprotein CD200 receptor 2 (271 aa).

The signal sequence occupies residues 1–23; it reads MSAPRLLISIIIMVSASSSSCMG. Residues 24–239 are Extracellular-facing; the sequence is GKQMTQNYST…TSGSPALSLL (216 aa). N30, N39, N86, N92, N189, and N217 each carry an N-linked (GlcNAc...) asparagine glycan. The Ig-like V-type domain maps to 46–132; the sequence is MDINAVLCCP…YRGIVVTPDG (87 aa). Residues 133–221 form the Ig-like C2-type domain; the sequence is NFHRGYHLQV…SHLTGNKSLS (89 aa). Residues C160 and C209 are joined by a disulfide bond. A helical membrane pass occupies residues 240–260; the sequence is IILYVKLSLFVVILVTTGFVF. The Cytoplasmic portion of the chain corresponds to 261–271; that stretch reads FQRINHVRKVL.

This sequence belongs to the CD200R family.

It is found in the membrane. Functionally, may be a receptor for the CD200/OX2 cell surface glycoprotein. In Homo sapiens (Human), this protein is Cell surface glycoprotein CD200 receptor 2 (CD200R1L).